The chain runs to 261 residues: Na(+)-translocating NADH-quinone reductase subunit C (261 aa).

A helical membrane pass occupies residues 12 to 32 (LGVVVGLSLVCSIIVSTAAVG). T229 is modified (FMN phosphoryl threonine).

Composed of six subunits; NqrA, NqrB, NqrC, NqrD, NqrE and NqrF. Requires FMN as cofactor.

It is found in the cell inner membrane. It catalyses the reaction a ubiquinone + n Na(+)(in) + NADH + H(+) = a ubiquinol + n Na(+)(out) + NAD(+). Functionally, NQR complex catalyzes the reduction of ubiquinone-1 to ubiquinol by two successive reactions, coupled with the transport of Na(+) ions from the cytoplasm to the periplasm. NqrA to NqrE are probably involved in the second step, the conversion of ubisemiquinone to ubiquinol. The sequence is that of Na(+)-translocating NADH-quinone reductase subunit C from Vibrio campbellii (strain ATCC BAA-1116).